The primary structure comprises 175 residues: ATP synthase subunit b (175 aa).

Residues 18-38 (VTSWEPFVANLIAFILMVVIL) traverse the membrane as a helical segment.

The protein belongs to the ATPase B chain family. As to quaternary structure, F-type ATPases have 2 components, F(1) - the catalytic core - and F(0) - the membrane proton channel. F(1) has five subunits: alpha(3), beta(3), gamma(1), delta(1), epsilon(1). F(0) has three main subunits: a(1), b(2) and c(10-14). The alpha and beta chains form an alternating ring which encloses part of the gamma chain. F(1) is attached to F(0) by a central stalk formed by the gamma and epsilon chains, while a peripheral stalk is formed by the delta and b chains.

Its subcellular location is the cell inner membrane. Functionally, f(1)F(0) ATP synthase produces ATP from ADP in the presence of a proton or sodium gradient. F-type ATPases consist of two structural domains, F(1) containing the extramembraneous catalytic core and F(0) containing the membrane proton channel, linked together by a central stalk and a peripheral stalk. During catalysis, ATP synthesis in the catalytic domain of F(1) is coupled via a rotary mechanism of the central stalk subunits to proton translocation. Component of the F(0) channel, it forms part of the peripheral stalk, linking F(1) to F(0). This Akkermansia muciniphila (strain ATCC BAA-835 / DSM 22959 / JCM 33894 / BCRC 81048 / CCUG 64013 / CIP 107961 / Muc) protein is ATP synthase subunit b.